Reading from the N-terminus, the 290-residue chain is 4-hydroxybenzoate octaprenyltransferase (290 aa).

The next 8 helical transmembrane spans lie at 23-43 (IGALLLLWPTLWALWVATPGM), 46-66 (LWILAVFVAGVWLMRAAGCVV), 99-119 (LFVVLVLLAFLLVLTLNAMTI), 141-161 (LPQVVLGAAFGWSIPMAFAAV), 163-183 (ESLPLSCWLMFLANILWAVAY), 212-232 (TLIIGILQLGVMALMALIGWL), 233-253 (NGLGGGYYWAVLVAGALFVYQ), and 268-288 (AFMNNNYVGLVLFLGLAMSYW).

This sequence belongs to the UbiA prenyltransferase family. The cofactor is Mg(2+).

The protein resides in the cell inner membrane. It carries out the reaction all-trans-octaprenyl diphosphate + 4-hydroxybenzoate = 4-hydroxy-3-(all-trans-octaprenyl)benzoate + diphosphate. The protein operates within cofactor biosynthesis; ubiquinone biosynthesis. Its function is as follows. Catalyzes the prenylation of para-hydroxybenzoate (PHB) with an all-trans polyprenyl group. Mediates the second step in the final reaction sequence of ubiquinone-8 (UQ-8) biosynthesis, which is the condensation of the polyisoprenoid side chain with PHB, generating the first membrane-bound Q intermediate 3-octaprenyl-4-hydroxybenzoate. This is 4-hydroxybenzoate octaprenyltransferase from Salmonella paratyphi C (strain RKS4594).